Consider the following 113-residue polypeptide: Hydrogenase maturation factor HypA (113 aa).

Residue His-2 coordinates Ni(2+). Positions 73, 76, 89, and 92 each coordinate Zn(2+).

It belongs to the HypA/HybF family.

Functionally, involved in the maturation of [NiFe] hydrogenases. Required for nickel insertion into the metal center of the hydrogenase. This is Hydrogenase maturation factor HypA from Moorella thermoacetica (strain ATCC 39073 / JCM 9320).